An 891-amino-acid polypeptide reads, in one-letter code: Alanine--tRNA ligase (891 aa).

Positions 569, 573, 671, and 675 each coordinate Zn(2+).

Belongs to the class-II aminoacyl-tRNA synthetase family. In terms of assembly, homotetramer. It depends on Zn(2+) as a cofactor.

It is found in the cytoplasm. The enzyme catalyses tRNA(Ala) + L-alanine + ATP = L-alanyl-tRNA(Ala) + AMP + diphosphate. Functionally, catalyzes the attachment of alanine to tRNA(Ala) in a two-step reaction: alanine is first activated by ATP to form Ala-AMP and then transferred to the acceptor end of tRNA(Ala). Also edits incorrectly charged Ser-tRNA(Ala) and Gly-tRNA(Ala) via its editing domain. This is Alanine--tRNA ligase from Blochmanniella floridana.